Here is a 48-residue protein sequence, read N- to C-terminus: ATP synthase protein 8 (48 aa).

The chain crosses the membrane as a helical span at residues 4–24; that stretch reads LVPFFFVNQVVFAFIVLTVLI.

Belongs to the ATPase protein 8 family. As to quaternary structure, F-type ATPases have 2 components, CF(1) - the catalytic core - and CF(0) - the membrane proton channel.

Its subcellular location is the mitochondrion membrane. In terms of biological role, mitochondrial membrane ATP synthase (F(1)F(0) ATP synthase or Complex V) produces ATP from ADP in the presence of a proton gradient across the membrane which is generated by electron transport complexes of the respiratory chain. F-type ATPases consist of two structural domains, F(1) - containing the extramembraneous catalytic core and F(0) - containing the membrane proton channel, linked together by a central stalk and a peripheral stalk. During catalysis, ATP synthesis in the catalytic domain of F(1) is coupled via a rotary mechanism of the central stalk subunits to proton translocation. Part of the complex F(0) domain. Minor subunit located with subunit a in the membrane. The protein is ATP synthase protein 8 (atp8) of Emericella nidulans (Aspergillus nidulans).